Here is a 166-residue protein sequence, read N- to C-terminus: Succinate dehydrogenase [ubiquinone] cytochrome b small subunit, mitochondrial (166 aa).

At 1–65 (MASVARSSAL…VPPPSPSHGS (65 aa)) the chain is on the mitochondrial matrix side. Residues 66–87 (YHWTFDRVVAAGLIPLTVAPFA) traverse the membrane as a helical segment. Residues 88-94 (AGSLNPT) lie on the Mitochondrial intermembrane side of the membrane. Residues 95 to 115 (MDAVLAATILIHSHTGFGNII) form a helical membrane-spanning segment. His-106 contributes to the heme binding site. Topologically, residues 116–124 (VDYVPSKRV) are mitochondrial matrix. Tyr-118 lines the a ubiquinone pocket. Residues 125 to 149 (PKARKVFTWGLNAATVLVGLALYEF) form a helical membrane-spanning segment. The Mitochondrial intermembrane segment spans residues 150 to 166 (ETTDVGLTETIKRVWKA).

This sequence belongs to the CybS family. Forms part of complex II containing four subunits: a flavoprotein (FP), an iron-sulfur protein (IP) and a cytochrome b composed of a large and a small subunit.

The protein resides in the mitochondrion inner membrane. The protein operates within carbohydrate metabolism; tricarboxylic acid cycle. In terms of biological role, membrane-anchoring subunit of succinate dehydrogenase (SDH) that is involved in complex II of the mitochondrial electron transport chain and is responsible for transferring electrons from succinate to ubiquinone (coenzyme Q). The protein is Succinate dehydrogenase [ubiquinone] cytochrome b small subunit, mitochondrial of Neurospora crassa (strain ATCC 24698 / 74-OR23-1A / CBS 708.71 / DSM 1257 / FGSC 987).